The sequence spans 537 residues: MAGSKQLVFNEEARKSLLAGVNKVADTVKITLGPKGRYVVIDKATSPIVTNDGVTIAKEIALHDKFENMGAKLVKEVAQKTQDKTGDGTTTATLLAQSMIVEGLKNITSGSNPIEVKKGIDAAVNASVGYIKTTSVPVKDRAKIVQVATISANNDEEIGTLISEAMEKVGYNGLISVEDAKSLETSLDVVKGMQFDRGFISPYMVTDNEKMVCEYEDCSILITDKKISSVKQMIPVLEMVASEGKPLLIIADDVEGEAQAALFLNIIRGALKVCAVKAPGYGDDRKAILEDIAILTGATVISEEKGMKIDGVTKRELGQAHVIRVDSEKTLIVGGRGEKKAVEDRMTLIQSQINIADSEYKKEELKKRLGNLGGGVAVIKVGAVTETELKEKKMRMDDALNATKAAVEEGVVVGGGITLFRAIESLDTLKFEDDRRVGVSIVKRALEEPIRQIAKNSGIEGAEVIAKIREHKNKHYGYNAKTGIYEDLMENGVIDPAKVVRIGLQNAGSIAGLILSTEVLITDFNDEKDQKSAAIII.

ATP is bound by residues threonine 31–proline 34, aspartate 87–threonine 91, glycine 415, and aspartate 495.

Belongs to the chaperonin (HSP60) family. As to quaternary structure, forms a cylinder of 14 subunits composed of two heptameric rings stacked back-to-back. Interacts with the co-chaperonin GroES.

It is found in the cytoplasm. It catalyses the reaction ATP + H2O + a folded polypeptide = ADP + phosphate + an unfolded polypeptide.. Functionally, together with its co-chaperonin GroES, plays an essential role in assisting protein folding. The GroEL-GroES system forms a nano-cage that allows encapsulation of the non-native substrate proteins and provides a physical environment optimized to promote and accelerate protein folding. This Methanoregula boonei (strain DSM 21154 / JCM 14090 / 6A8) protein is Chaperonin GroEL.